The primary structure comprises 382 residues: Succinate--CoA ligase [ADP-forming] subunit beta (382 aa).

The ATP-grasp domain occupies 9 to 240 (KELFSKYGVK…PRDVSEFEMY (232 aa)). Residues Lys-45, 52 to 54 (GRG), Val-94, and Glu-99 contribute to the ATP site. Positions 193 and 207 each coordinate Mg(2+). Substrate is bound by residues Asn-260 and 317–319 (GIT).

The protein belongs to the succinate/malate CoA ligase beta subunit family. Heterotetramer of two alpha and two beta subunits. It depends on Mg(2+) as a cofactor.

It carries out the reaction succinate + ATP + CoA = succinyl-CoA + ADP + phosphate. The enzyme catalyses GTP + succinate + CoA = succinyl-CoA + GDP + phosphate. The protein operates within carbohydrate metabolism; tricarboxylic acid cycle; succinate from succinyl-CoA (ligase route): step 1/1. Succinyl-CoA synthetase functions in the citric acid cycle (TCA), coupling the hydrolysis of succinyl-CoA to the synthesis of either ATP or GTP and thus represents the only step of substrate-level phosphorylation in the TCA. The beta subunit provides nucleotide specificity of the enzyme and binds the substrate succinate, while the binding sites for coenzyme A and phosphate are found in the alpha subunit. The protein is Succinate--CoA ligase [ADP-forming] subunit beta of Pyrobaculum arsenaticum (strain DSM 13514 / JCM 11321 / PZ6).